Reading from the N-terminus, the 169-residue chain is Peptide deformylase (169 aa).

C93 and H135 together coordinate Fe cation. The active site involves E136. Residue H139 participates in Fe cation binding.

Belongs to the polypeptide deformylase family. Fe(2+) serves as cofactor.

It carries out the reaction N-terminal N-formyl-L-methionyl-[peptide] + H2O = N-terminal L-methionyl-[peptide] + formate. In terms of biological role, removes the formyl group from the N-terminal Met of newly synthesized proteins. Requires at least a dipeptide for an efficient rate of reaction. N-terminal L-methionine is a prerequisite for activity but the enzyme has broad specificity at other positions. The polypeptide is Peptide deformylase (Aquifex aeolicus (strain VF5)).